Reading from the N-terminus, the 184-residue chain is Large ribosomal subunit protein uL18 (184 aa).

It belongs to the universal ribosomal protein uL18 family. Part of the 50S ribosomal subunit. Contacts the 5S and 23S rRNAs.

This is one of the proteins that bind and probably mediate the attachment of the 5S RNA into the large ribosomal subunit, where it forms part of the central protuberance. This chain is Large ribosomal subunit protein uL18 (rpl18), found in Haloferax volcanii (strain ATCC 29605 / DSM 3757 / JCM 8879 / NBRC 14742 / NCIMB 2012 / VKM B-1768 / DS2) (Halobacterium volcanii).